The primary structure comprises 402 residues: uncharacterized protein (402 aa).

Helical transmembrane passes span 11-31 (LALA…IDMY), 48-68 (LVQL…LIVG), 80-100 (LLIC…SPNI), 108-125 (FLQG…RAIV), 140-160 (LLMV…GAIL), 167-187 (WHTI…LIAL), 219-239 (FMGY…YVSG), 254-274 (VFSI…FIIG), 286-306 (LRIA…MTMI), 308-328 (GPLA…GMVL), 347-367 (SALL…LVGI), and 373-393 (VPMG…FFGL).

It belongs to the major facilitator superfamily. Bcr/CmlA family.

Its subcellular location is the cell membrane. This is an uncharacterized protein from Bacillus subtilis (strain 168).